Consider the following 426-residue polypeptide: Serine/threonine-protein kinase ssn3 (426 aa).

The Protein kinase domain maps to 41-368 (YHIVGFISSG…AREALEHPYF (328 aa)). Residues 47-55 (ISSGTYGRV) and K71 contribute to the ATP site. D173 functions as the Proton acceptor in the catalytic mechanism. A disordered region spans residues 390–426 (RVTQDDNDIRSGSLPGTKRSGLPDDSLMGRAAKRLKE).

It belongs to the protein kinase superfamily. CMGC Ser/Thr protein kinase family. CDC2/CDKX subfamily. As to quaternary structure, component of the srb8-11 complex, a regulatory module of the Mediator complex. Requires Mg(2+) as cofactor.

The protein localises to the nucleus. It carries out the reaction L-seryl-[protein] + ATP = O-phospho-L-seryl-[protein] + ADP + H(+). The enzyme catalyses L-threonyl-[protein] + ATP = O-phospho-L-threonyl-[protein] + ADP + H(+). The catalysed reaction is [DNA-directed RNA polymerase] + ATP = phospho-[DNA-directed RNA polymerase] + ADP + H(+). Its function is as follows. Component of the srb8-11 complex. The srb8-11 complex is a regulatory module of the Mediator complex which is itself dependent transcription. The srb8-11 complex may be involved in the transcriptional repression of a subset of genes regulated by Mediator. It may inhibit the association of the Mediator complex with RNA polymerase II to form the holoenzyme complex. The srb8-11 complex phosphorylates the C-terminal domain (CTD) of the largest subunit of RNA polymerase II. The sequence is that of Serine/threonine-protein kinase ssn3 (ssn3) from Neosartorya fischeri (strain ATCC 1020 / DSM 3700 / CBS 544.65 / FGSC A1164 / JCM 1740 / NRRL 181 / WB 181) (Aspergillus fischerianus).